The chain runs to 537 residues: CTP synthase (537 aa).

Residues 1 to 267 form an amidoligase domain region; sequence MTKYIFVTGG…DQIVCDHLKL (267 aa). Ser-13 lines the CTP pocket. Ser-13 lines the UTP pocket. ATP is bound at residue 14-19; the sequence is SIGKGI. Tyr-54 is a binding site for L-glutamine. Asp-71 lines the ATP pocket. Mg(2+) contacts are provided by Asp-71 and Glu-141. CTP-binding positions include 148–150, 188–193, and Lys-224; these read DIE and KTKPTQ. UTP-binding positions include 188-193 and Lys-224; that span reads KTKPTQ. Residue 240–242 coordinates ATP; it reads RDV. The Glutamine amidotransferase type-1 domain maps to 292–535; sequence RIALVGKYVE…VTAAVKNKNQ (244 aa). Gly-354 lines the L-glutamine pocket. Cys-381 serves as the catalytic Nucleophile; for glutamine hydrolysis. Residues 382-385, Glu-405, and Arg-463 contribute to the L-glutamine site; that span reads LGMQ. Active-site residues include His-508 and Glu-510.

It belongs to the CTP synthase family. In terms of assembly, homotetramer.

It carries out the reaction UTP + L-glutamine + ATP + H2O = CTP + L-glutamate + ADP + phosphate + 2 H(+). It catalyses the reaction L-glutamine + H2O = L-glutamate + NH4(+). The catalysed reaction is UTP + NH4(+) + ATP = CTP + ADP + phosphate + 2 H(+). It participates in pyrimidine metabolism; CTP biosynthesis via de novo pathway; CTP from UDP: step 2/2. Its activity is regulated as follows. Allosterically activated by GTP, when glutamine is the substrate; GTP has no effect on the reaction when ammonia is the substrate. The allosteric effector GTP functions by stabilizing the protein conformation that binds the tetrahedral intermediate(s) formed during glutamine hydrolysis. Inhibited by the product CTP, via allosteric rather than competitive inhibition. Its function is as follows. Catalyzes the ATP-dependent amination of UTP to CTP with either L-glutamine or ammonia as the source of nitrogen. Regulates intracellular CTP levels through interactions with the four ribonucleotide triphosphates. This is CTP synthase from Streptococcus equi subsp. zooepidemicus (strain H70).